The primary structure comprises 113 residues: uncharacterized protein (113 aa).

Positions 16–113 (TPFGYTLSLI…CEWGVKNQNN (98 aa)) constitute an HTH hxlR-type domain.

This is an uncharacterized protein from Halalkalibacterium halodurans (strain ATCC BAA-125 / DSM 18197 / FERM 7344 / JCM 9153 / C-125) (Bacillus halodurans).